Reading from the N-terminus, the 257-residue chain is Zinc import ATP-binding protein ZnuC (257 aa).

An ABC transporter domain is found at I5 to H220. G37–S44 is an ATP binding site.

The protein belongs to the ABC transporter superfamily. Zinc importer (TC 3.A.1.15.5) family. As to quaternary structure, the complex is composed of two ATP-binding proteins (ZnuC), two transmembrane proteins (ZnuB) and a solute-binding protein (ZnuA).

The protein localises to the cell inner membrane. The enzyme catalyses Zn(2+)(out) + ATP(in) + H2O(in) = Zn(2+)(in) + ADP(in) + phosphate(in) + H(+)(in). In terms of biological role, part of the ABC transporter complex ZnuABC involved in zinc import. Responsible for energy coupling to the transport system. This chain is Zinc import ATP-binding protein ZnuC, found in Photorhabdus laumondii subsp. laumondii (strain DSM 15139 / CIP 105565 / TT01) (Photorhabdus luminescens subsp. laumondii).